A 166-amino-acid chain; its full sequence is Large ribosomal subunit protein bL17 (166 aa).

Residues 122 to 166 (PESAPVKAKQDRSKRVRGSKKTQEGSEKAEVSASAGEAAAVTEEK) form a disordered region. Over residues 142-151 (KTQEGSEKAE) the composition is skewed to basic and acidic residues. Residues 152–166 (VSASAGEAAAVTEEK) show a composition bias toward low complexity.

It belongs to the bacterial ribosomal protein bL17 family. In terms of assembly, part of the 50S ribosomal subunit. Contacts protein L32.

In Chlorobium phaeobacteroides (strain BS1), this protein is Large ribosomal subunit protein bL17.